The following is a 398-amino-acid chain: Phosphoglycerate kinase (398 aa).

Residues 21–23 (DFN), arginine 36, 59–62 (HLGR), arginine 119, and arginine 157 each bind substrate. ATP contacts are provided by residues lysine 208, glycine 296, glutamate 327, and 354-357 (GGDS).

This sequence belongs to the phosphoglycerate kinase family. As to quaternary structure, monomer.

It localises to the cytoplasm. It carries out the reaction (2R)-3-phosphoglycerate + ATP = (2R)-3-phospho-glyceroyl phosphate + ADP. It participates in carbohydrate degradation; glycolysis; pyruvate from D-glyceraldehyde 3-phosphate: step 2/5. In Streptococcus pyogenes serotype M5 (strain Manfredo), this protein is Phosphoglycerate kinase.